The chain runs to 374 residues: 4-hydroxy-3-methylbut-2-en-1-yl diphosphate synthase (flavodoxin) (374 aa).

Residues Cys-268, Cys-271, Cys-303, and Glu-310 each coordinate [4Fe-4S] cluster.

The protein belongs to the IspG family. It depends on [4Fe-4S] cluster as a cofactor.

It catalyses the reaction (2E)-4-hydroxy-3-methylbut-2-enyl diphosphate + oxidized [flavodoxin] + H2O + 2 H(+) = 2-C-methyl-D-erythritol 2,4-cyclic diphosphate + reduced [flavodoxin]. The protein operates within isoprenoid biosynthesis; isopentenyl diphosphate biosynthesis via DXP pathway; isopentenyl diphosphate from 1-deoxy-D-xylulose 5-phosphate: step 5/6. Converts 2C-methyl-D-erythritol 2,4-cyclodiphosphate (ME-2,4cPP) into 1-hydroxy-2-methyl-2-(E)-butenyl 4-diphosphate. The sequence is that of 4-hydroxy-3-methylbut-2-en-1-yl diphosphate synthase (flavodoxin) from Geobacillus kaustophilus (strain HTA426).